The primary structure comprises 228 residues: Large ribosomal subunit protein bL25 (228 aa).

A disordered region spans residues 196–228; that stretch reads EEAAVAEAQSAESAEGKAEAEAEATNEKNKSEA. Over residues 209–228 the composition is skewed to basic and acidic residues; that stretch reads AEGKAEAEAEATNEKNKSEA.

It belongs to the bacterial ribosomal protein bL25 family. CTC subfamily. In terms of assembly, part of the 50S ribosomal subunit; part of the 5S rRNA/L5/L18/L25 subcomplex. Contacts the 5S rRNA. Binds to the 5S rRNA independently of L5 and L18.

In terms of biological role, this is one of the proteins that binds to the 5S RNA in the ribosome where it forms part of the central protuberance. This Methylorubrum extorquens (strain CM4 / NCIMB 13688) (Methylobacterium extorquens) protein is Large ribosomal subunit protein bL25.